The primary structure comprises 1170 residues: Chromosome partition protein Smc (1170 aa).

32–39 (PNGCGKSN) serves as a coordination point for ATP. Coiled coils occupy residues 169-215 (GVSK…AVVA), 245-365 (DRQR…DAAA), and 401-508 (EAAH…TQGK). The 104-residue stretch at 520-623 (ALPRLWKKLH…VADDLAQALA (104 aa)) folds into the SMC hinge domain. 2 coiled-coil regions span residues 664 to 944 (QEIE…KEKL) and 983 to 1020 (ERKV…LQAT).

It belongs to the SMC family. In terms of assembly, homodimer.

Its subcellular location is the cytoplasm. Functionally, required for chromosome condensation and partitioning. The polypeptide is Chromosome partition protein Smc (Burkholderia pseudomallei (strain 1710b)).